We begin with the raw amino-acid sequence, 171 residues long: Peptide methionine sulfoxide reductase MsrA (171 aa).

The active site involves cysteine 13.

Belongs to the MsrA Met sulfoxide reductase family.

The enzyme catalyses L-methionyl-[protein] + [thioredoxin]-disulfide + H2O = L-methionyl-(S)-S-oxide-[protein] + [thioredoxin]-dithiol. It carries out the reaction [thioredoxin]-disulfide + L-methionine + H2O = L-methionine (S)-S-oxide + [thioredoxin]-dithiol. In terms of biological role, has an important function as a repair enzyme for proteins that have been inactivated by oxidation. Catalyzes the reversible oxidation-reduction of methionine sulfoxide in proteins to methionine. The polypeptide is Peptide methionine sulfoxide reductase MsrA (Mycobacterium sp. (strain MCS)).